The following is a 280-amino-acid chain: Shikimate kinase (280 aa).

ATP is bound at residue 74–84 (PGGSGLGSSSA).

It belongs to the GHMP kinase family. Archaeal shikimate kinase subfamily.

Its subcellular location is the cytoplasm. The catalysed reaction is shikimate + ATP = 3-phosphoshikimate + ADP + H(+). Its pathway is metabolic intermediate biosynthesis; chorismate biosynthesis; chorismate from D-erythrose 4-phosphate and phosphoenolpyruvate: step 5/7. The chain is Shikimate kinase (aroK) from Archaeoglobus fulgidus (strain ATCC 49558 / DSM 4304 / JCM 9628 / NBRC 100126 / VC-16).